A 913-amino-acid polypeptide reads, in one-letter code: Protein translocase subunit SecA (913 aa).

ATP is bound by residues Gln87, 105–109 (GEGKT), and Asp512. The disordered stretch occupies residues 864 to 913 (LDQPEEEPAEVEGQPDVAVASVRTEPKIGRNEPCPCGSGKKYKHCHGQVQ). 4 residues coordinate Zn(2+): Cys897, Cys899, Cys908, and His909. Basic residues predominate over residues 903–913 (KKYKHCHGQVQ).

This sequence belongs to the SecA family. In terms of assembly, monomer and homodimer. Part of the essential Sec protein translocation apparatus which comprises SecA, SecYEG and auxiliary proteins SecDF-YajC and YidC. Zn(2+) is required as a cofactor.

The protein localises to the cell inner membrane. It is found in the cytoplasm. The catalysed reaction is ATP + H2O + cellular proteinSide 1 = ADP + phosphate + cellular proteinSide 2.. Its function is as follows. Part of the Sec protein translocase complex. Interacts with the SecYEG preprotein conducting channel. Has a central role in coupling the hydrolysis of ATP to the transfer of proteins into and across the cell membrane, serving both as a receptor for the preprotein-SecB complex and as an ATP-driven molecular motor driving the stepwise translocation of polypeptide chains across the membrane. This Stutzerimonas stutzeri (strain A1501) (Pseudomonas stutzeri) protein is Protein translocase subunit SecA.